Here is a 137-residue protein sequence, read N- to C-terminus: Nucleoside diphosphate kinase (137 aa).

ATP-binding residues include Lys-10, Phe-58, Arg-86, Thr-92, Arg-103, and Asn-113. Catalysis depends on His-116, which acts as the Pros-phosphohistidine intermediate.

The protein belongs to the NDK family. Homotetramer. Mg(2+) is required as a cofactor.

It is found in the cytoplasm. The catalysed reaction is a 2'-deoxyribonucleoside 5'-diphosphate + ATP = a 2'-deoxyribonucleoside 5'-triphosphate + ADP. The enzyme catalyses a ribonucleoside 5'-diphosphate + ATP = a ribonucleoside 5'-triphosphate + ADP. Major role in the synthesis of nucleoside triphosphates other than ATP. The ATP gamma phosphate is transferred to the NDP beta phosphate via a ping-pong mechanism, using a phosphorylated active-site intermediate. The polypeptide is Nucleoside diphosphate kinase (Helicobacter pylori (strain Shi470)).